The sequence spans 256 residues: MEGEDLGSWLGLGIGGGGYAYGGDDCRRSPSSPSPVQMLFSQHVKEEITRGYDHGRDEEQASGSKIMKGERGARLRVMRSIRNSGGDGSRSRVLSLGDDGGDGGSGGGGGGGTRKKLQLTKEQSTLLEDSFRVHNILSHAQKHELARQLKLKPRQVEVWFQNRRARTKLKQTEVDCEFLKRCCESLTEENKQLKHELMELRRLASPAAAAAGSQLYVQFPRAAAAAMVNVCPSCEKVTVMGGGGGETGKSSSSYSS.

Residues 52–116 (YDHGRDEEQA…GGGGGGTRKK (65 aa)) are disordered. Residues 102 to 112 (DGGSGGGGGGG) are compositionally biased toward gly residues. Residues 112 to 171 (GTRKKLQLTKEQSTLLEDSFRVHNILSHAQKHELARQLKLKPRQVEVWFQNRRARTKLKQ) constitute a DNA-binding region (homeobox). The interval 170-214 (KQTEVDCEFLKRCCESLTEENKQLKHELMELRRLASPAAAAAGSQ) is leucine-zipper.

This sequence belongs to the HD-ZIP homeobox family. Class II subfamily. Expressed in roots, leaf sheaths and blades and panicles.

The protein resides in the nucleus. Probable transcription factor. In Oryza sativa subsp. japonica (Rice), this protein is Homeobox-leucine zipper protein HOX18 (HOX18).